The sequence spans 1354 residues: Rho-associated protein kinase 1 (1354 aa).

An N-acetylserine modification is found at S2. Positions 76–338 constitute a Protein kinase domain; the sequence is YEVVKVIGRG…VEEIKRHLFF (263 aa). ATP is bound by residues 82-90 and K105; that span reads IGRGAFGEV. The active-site Proton acceptor is the D198. In terms of domain architecture, AGC-kinase C-terminal spans 341–409; that stretch reads DQWAWETLRD…YSNRRYLSPA (69 aa). Residues 368-727 are interaction with FHOD1; it reads FDDLEEDKGD…KKLKEEREAR (360 aa). Residues 422–692 adopt a coiled-coil conformation; the sequence is KSLQENLQKT…RLEQEVNEHK (271 aa). In terms of domain architecture, REM-1 spans 479-556; the sequence is STVSQIEKEK…LEEANDLLRT (78 aa). Residues 707 to 946 form an SHROOM3 binding region; sequence EAKSVAMCEM…AVSRLEETNS (240 aa). The 67-residue stretch at 949 to 1015 folds into the RhoBD domain; sequence TKDIELLRKE…LAEIMNRKDF (67 aa). The RHOA binding stretch occupies residues 998 to 1010; the sequence is LKTQAVNKLAEIM. Residues 1011 to 1102 adopt a coiled-coil conformation; the sequence is NRKDFKIDKK…KLSDLSDSTS (92 aa). Residues 1101-1120 form a disordered region; it reads TSVASFPSADETDPNLPESR. Phosphoserine occurs at positions 1105 and 1108. The segment at 1115–1354 is auto-inhibitory; it reads NLPESRIEGW…VVKNTSGKTS (240 aa). The PH domain maps to 1118–1317; it reads ESRIEGWLSV…WVTHLVKKIP (200 aa). The segment at 1228–1283 adopts a Phorbol-ester/DAG-type zinc-finger fold; that stretch reads GHEFIPTLYHFPANCEACAKPLWHVFKPPPALECRRCHVKCHRDHLDKKEDLISPC. Position 1328 is a phosphoserine (S1328). The interval 1333-1354 is disordered; the sequence is STRSTANQSFRKVVKNTSGKTS.

The protein belongs to the protein kinase superfamily. AGC Ser/Thr protein kinase family. Homodimer. Interacts with RHOA (activated by GTP), RHOB, RHOC, GEM, MYLC2B, RHOE, PPP1R12A, LIMK1, LIMK2, TSG101, CHORDC1, DAPK3, PFN1, PTEN and JIP3. Interacts with FHOD1 in a Src-dependent manner. Interacts with ITGB1BP1 (via N-terminus and PTB domain). Interacts with SHROOM3. Mg(2+) serves as cofactor. Post-translationally, autophosphorylated on serine and threonine residues. Cleaved by caspase-3 during apoptosis. This leads to constitutive activation of the kinase and membrane blebbing. Detected in corneal epithelium.

Its subcellular location is the cytoplasm. It localises to the cytoskeleton. The protein resides in the microtubule organizing center. The protein localises to the centrosome. It is found in the centriole. Its subcellular location is the golgi apparatus membrane. It localises to the cell projection. The protein resides in the bleb. The protein localises to the cell membrane. It is found in the lamellipodium. Its subcellular location is the ruffle. It carries out the reaction L-seryl-[protein] + ATP = O-phospho-L-seryl-[protein] + ADP + H(+). It catalyses the reaction L-threonyl-[protein] + ATP = O-phospho-L-threonyl-[protein] + ADP + H(+). With respect to regulation, activated by RHOA binding. Inhibited by Y-27632. Functionally, protein kinase which is a key regulator of the actin cytoskeleton and cell polarity. Involved in regulation of smooth muscle contraction, actin cytoskeleton organization, stress fiber and focal adhesion formation, neurite retraction, cell adhesion and motility via phosphorylation of DAPK3, GFAP, LIMK1, LIMK2, MYL9/MLC2, TPPP, PFN1 and PPP1R12A. Phosphorylates FHOD1 and acts synergistically with it to promote SRC-dependent non-apoptotic plasma membrane blebbing. Phosphorylates JIP3 and regulates the recruitment of JNK to JIP3 upon UVB-induced stress. Acts as a suppressor of inflammatory cell migration by regulating PTEN phosphorylation and stability. Acts as a negative regulator of VEGF-induced angiogenic endothelial cell activation. Required for centrosome positioning and centrosome-dependent exit from mitosis. Plays a role in terminal erythroid differentiation. Inhibits podocyte motility via regulation of actin cytoskeletal dynamics and phosphorylation of CFL1. Promotes keratinocyte terminal differentiation. Involved in osteoblast compaction through the fibronectin fibrillogenesis cell-mediated matrix assembly process, essential for osteoblast mineralization. May regulate closure of the eyelids and ventral body wall by inducing the assembly of actomyosin bundles. The polypeptide is Rho-associated protein kinase 1 (ROCK1) (Oryctolagus cuniculus (Rabbit)).